Reading from the N-terminus, the 413-residue chain is L-cysteine:1D-myo-inositol 2-amino-2-deoxy-alpha-D-glucopyranoside ligase (413 aa).

Position 15 (C15) interacts with Zn(2+). Residues 15–18 (CGIT), T30, and 53–55 (NVT) contribute to the L-cysteinyl-5'-AMP site. The 'HIGH' region motif lies at 17–27 (ITPYDATHLGH). The 'ERGGDP' region signature appears at 155-160 (ERGGDP). L-cysteinyl-5'-AMP is bound at residue W195. C199 is a binding site for Zn(2+). 217–219 (GTD) lines the L-cysteinyl-5'-AMP pocket. H224 contributes to the Zn(2+) binding site. V251 lines the L-cysteinyl-5'-AMP pocket. The 'KMSKS' region signature appears at 257–261 (KMSKS).

The protein belongs to the class-I aminoacyl-tRNA synthetase family. MshC subfamily. In terms of assembly, monomer. Zn(2+) is required as a cofactor.

The catalysed reaction is 1D-myo-inositol 2-amino-2-deoxy-alpha-D-glucopyranoside + L-cysteine + ATP = 1D-myo-inositol 2-(L-cysteinylamino)-2-deoxy-alpha-D-glucopyranoside + AMP + diphosphate + H(+). Catalyzes the ATP-dependent condensation of GlcN-Ins and L-cysteine to form L-Cys-GlcN-Ins. This chain is L-cysteine:1D-myo-inositol 2-amino-2-deoxy-alpha-D-glucopyranoside ligase, found in Frankia alni (strain DSM 45986 / CECT 9034 / ACN14a).